The chain runs to 324 residues: Beta-ketoacyl-[acyl-carrier-protein] synthase III (324 aa).

Residues C114 and H251 contribute to the active site. Positions 252–256 are ACP-binding; sequence QANKR. N281 is an active-site residue.

The protein belongs to the thiolase-like superfamily. FabH family. As to quaternary structure, homodimer.

Its subcellular location is the cytoplasm. It carries out the reaction malonyl-[ACP] + acetyl-CoA + H(+) = 3-oxobutanoyl-[ACP] + CO2 + CoA. It participates in lipid metabolism; fatty acid biosynthesis. Functionally, catalyzes the condensation reaction of fatty acid synthesis by the addition to an acyl acceptor of two carbons from malonyl-ACP. Catalyzes the first condensation reaction which initiates fatty acid synthesis and may therefore play a role in governing the total rate of fatty acid production. Possesses both acetoacetyl-ACP synthase and acetyl transacylase activities. Its substrate specificity determines the biosynthesis of branched-chain and/or straight-chain of fatty acids. The sequence is that of Beta-ketoacyl-[acyl-carrier-protein] synthase III from Bradyrhizobium sp. (strain BTAi1 / ATCC BAA-1182).